Consider the following 65-residue polypeptide: Small ribosomal subunit protein eS27 (65 aa).

Residues Cys-20, Cys-23, Cys-39, and Cys-42 each contribute to the Zn(2+) site. A C4-type zinc finger spans residues Cys-20–Cys-42.

The protein belongs to the eukaryotic ribosomal protein eS27 family. In terms of assembly, part of the 30S ribosomal subunit. The cofactor is Zn(2+).

The protein is Small ribosomal subunit protein eS27 of Pyrococcus horikoshii (strain ATCC 700860 / DSM 12428 / JCM 9974 / NBRC 100139 / OT-3).